Consider the following 481-residue polypeptide: Proline--tRNA ligase (481 aa).

This sequence belongs to the class-II aminoacyl-tRNA synthetase family. ProS type 3 subfamily. Homodimer.

The protein localises to the cytoplasm. The catalysed reaction is tRNA(Pro) + L-proline + ATP = L-prolyl-tRNA(Pro) + AMP + diphosphate. Its function is as follows. Catalyzes the attachment of proline to tRNA(Pro) in a two-step reaction: proline is first activated by ATP to form Pro-AMP and then transferred to the acceptor end of tRNA(Pro). Can inadvertently accommodate and process cysteine. Misacylated Cys-tRNA(Pro) is not edited by ProRS; this function may be provided by ProX. The polypeptide is Proline--tRNA ligase (proS) (Acetoanaerobium sticklandii (strain ATCC 12662 / DSM 519 / JCM 1433 / CCUG 9281 / NCIMB 10654 / HF) (Clostridium sticklandii)).